Consider the following 238-residue polypeptide: tRNA (guanine-N(7)-)-methyltransferase (238 aa).

Glutamate 68, glutamate 93, aspartate 121, and aspartate 143 together coordinate S-adenosyl-L-methionine. Aspartate 143 is an active-site residue. Substrate-binding positions include lysine 147, aspartate 179, and 216 to 219 (TRYE).

The protein belongs to the class I-like SAM-binding methyltransferase superfamily. TrmB family.

It carries out the reaction guanosine(46) in tRNA + S-adenosyl-L-methionine = N(7)-methylguanosine(46) in tRNA + S-adenosyl-L-homocysteine. It functions in the pathway tRNA modification; N(7)-methylguanine-tRNA biosynthesis. Functionally, catalyzes the formation of N(7)-methylguanine at position 46 (m7G46) in tRNA. The protein is tRNA (guanine-N(7)-)-methyltransferase of Paramagnetospirillum magneticum (strain ATCC 700264 / AMB-1) (Magnetospirillum magneticum).